The chain runs to 192 residues: Peptidyl-tRNA hydrolase (192 aa).

Residue Y17 participates in tRNA binding. H22 acts as the Proton acceptor in catalysis. 3 residues coordinate tRNA: F68, N70, and N116.

Belongs to the PTH family. In terms of assembly, monomer.

It localises to the cytoplasm. It catalyses the reaction an N-acyl-L-alpha-aminoacyl-tRNA + H2O = an N-acyl-L-amino acid + a tRNA + H(+). In terms of biological role, hydrolyzes ribosome-free peptidyl-tRNAs (with 1 or more amino acids incorporated), which drop off the ribosome during protein synthesis, or as a result of ribosome stalling. Catalyzes the release of premature peptidyl moieties from peptidyl-tRNA molecules trapped in stalled 50S ribosomal subunits, and thus maintains levels of free tRNAs and 50S ribosomes. This Xylella fastidiosa (strain M12) protein is Peptidyl-tRNA hydrolase.